We begin with the raw amino-acid sequence, 292 residues long: Transcription factor HFR1 (292 aa).

Residues 114–153 (KRRIQVLSSDDESEEFTREVPSVTRKGSKRRRRDEKMSNK) are disordered. Positions 134-147 (PSVTRKGSKRRRRD) are basic motif; degenerate. One can recognise a bHLH domain in the interval 134–183 (PSVTRKGSKRRRRDEKMSNKMRKLQQLVPNCHKTDKVSVLDKTIEYMKNL). The span at 139–153 (KGSKRRRRDEKMSNK) shows a compositional bias: basic residues. Residues 141–148 (SKRRRRDE) carry the Nuclear localization signal motif. Residues 148–183 (EKMSNKMRKLQQLVPNCHKTDKVSVLDKTIEYMKNL) are helix-loop-helix motif.

Binds to FHY1 and FHL. Forms PHYA/FHY1/HFR1 complex. Homodimer and heterodimer with PIF3. Do not interact alone with either phytochrome A (phyA) or B (phyB), but REP1/PIF3 complex binds to phyA and phyB, preferentially to the Pfr forms. Forms non-functional heterodimer with PRE6, causing liberation of PIF4 from the transcriptionally inactive complex HFR1-PIF4. Repressed when bound to PRE1, PRE2 and PRE4. Mainly expressed in fruits and flowers and, to a lower extent, in leaves, stems, seedlings and roots.

It localises to the nucleus. Atypical bHLH transcription factor that regulates photomorphogenesis through modulation of phytochrome (e.g. PHYA) and cryptochrome signalings. Suppresses the transcriptional regulation activity of PIF4 by forming non-DNA-binding heterodimer. The polypeptide is Transcription factor HFR1 (Arabidopsis thaliana (Mouse-ear cress)).